The primary structure comprises 110 residues: Small ribosomal subunit protein eS25 (110 aa).

The tract at residues 1 to 39 (MPPKAAGGKSKQIQASKAAAKGSSGGAGRKKWSKGRSRE) is disordered.

Belongs to the eukaryotic ribosomal protein eS25 family.

This Dictyostelium discoideum (Social amoeba) protein is Small ribosomal subunit protein eS25 (rps25).